A 577-amino-acid polypeptide reads, in one-letter code: MNPVNATALYISASRLVLNYDPGDPKAFTEINRLLPYFRQSLSCCVCGHLLQDPIAPTNSTCQHYVCKTCKGKKMMMKPSCSWCKDYEQFEENKQLSILVNCYKKLCEYITQTTLARDIIEAVDCSSDILALLNDGSLFCEETEKPSDSSFTLCLTHSPLPSTSEPTTDPQASLSPMSESTLSIAIGSSVINGLPTYNGLSIDRFGINIPSPEHSNTIDVCNTVDIKTEDLSDSLPPVCDTVATDLCSTGIDICSFSEDIKPGDSLLLSVEEVLRSLETVSNTEVCCPNLQPNLEATVSNGPFLQLSSQSLSHNVFMSTSPALHGLSCTAATPKIAKLNRKRSRSESDSEKVQPLPISTIIRGPTLGASAPVTVKRESKISLQPIATVPNGGTTPKISKTVLLSTKSMKKSHEHGSKKSHSKTKPGILKKDKAVKEKIPSHHFMPGSPTKTVYKKPQEKKGCKCGRATQNPSVLTCRGQRCPCYSNRKACLDCICRGCQNSYMANGEKKLEAFAVPEKALEQTRLTLGINVTSIAVRNASTSTSVINVTGSPVTTFLAASTHDDKSLDEAIDMRFDC.

A sufficient for interaction with MSL1 region spans residues 1 to 116; the sequence is MNPVNATALY…CEYITQTTLA (116 aa). The Zn(2+) site is built by Cys44, Cys47, Cys62, His64, Cys67, Cys70, Cys81, and Cys84. An RING-type zinc finger spans residues 44 to 85; it reads CCVCGHLLQDPIAPTNSTCQHYVCKTCKGKKMMMKPSCSWCK. Lys375 is covalently cross-linked (Glycyl lysine isopeptide (Lys-Gly) (interchain with G-Cter in SUMO2)). Residues 405–427 are disordered; sequence TKSMKKSHEHGSKKSHSKTKPGI. Residues 407–423 show a composition bias toward basic residues; that stretch reads SMKKSHEHGSKKSHSKT. Ser447 bears the Phosphoserine mark. Residues 457-508 enclose the CXC MSL2-type domain; it reads QEKKGCKCGRATQNPSVLTCRGQRCPCYSNRKACLDCICRGCQNSYMANGEK. The Zn(2+) site is built by Cys462, Cys464, Cys476, Cys481, Cys483, Cys490, Cys493, Cys495, and Cys498.

This sequence belongs to the MSL2 family. In terms of assembly, component of a multisubunit histone acetyltransferase complex (MSL) at least composed of the KAT8/MOF/MYST1, MSL1/hampin, MSL2 and MSL3. Forms a MSL heterotetrameric core with MSL1.

The protein localises to the nucleus. It is found in the chromosome. It catalyses the reaction S-ubiquitinyl-[E2 ubiquitin-conjugating enzyme]-L-cysteine + [acceptor protein]-L-lysine = [E2 ubiquitin-conjugating enzyme]-L-cysteine + N(6)-ubiquitinyl-[acceptor protein]-L-lysine.. Its pathway is protein modification; protein ubiquitination. In terms of biological role, non-catalytic component of the MSL histone acetyltransferase complex, a multiprotein complex that mediates the majority of histone H4 acetylation at 'Lys-16' (H4K16ac), an epigenetic mark that prevents chromatin compaction. The MSL complex is required for chromosome stability and genome integrity by maintaining homeostatic levels of H4K16ac. The MSL complex is also involved in gene dosage by promoting up-regulation of genes expressed by the X chromosome. X up-regulation is required to compensate for autosomal biallelic expression. The MSL complex also participates in gene dosage compensation by promoting expression of Tsix non-coding RNA. MSL2 plays a key role in gene dosage by ensuring biallelic expression of a subset of dosage-sensitive genes, including many haploinsufficient genes. Acts by promoting promoter-enhancer contacts, thereby preventing DNA methylation of one allele and creating a methylation-free environment for methylation-sensitive transcription factors such as SP1, KANSL1 and KANSL3. Also acts as an E3 ubiquitin ligase that promotes monoubiquitination of histone H2B at 'Lys-35' (H2BK34Ub), but not that of H2A. This activity is greatly enhanced by heterodimerization with MSL1. H2B ubiquitination in turn stimulates histone H3 methylation at 'Lys-4' (H3K4me) and 'Lys-79' (H3K79me) and leads to gene activation, including that of HOXA9 and MEIS1. Also involved in the DNA damage response by mediating ubiquitination of TP53/p53 and TP53BP1. The chain is E3 ubiquitin-protein ligase MSL2 from Homo sapiens (Human).